Reading from the N-terminus, the 571-residue chain is ATP-dependent RNA helicase RhlB (571 aa).

A Q motif motif is present at residues 9 to 37 (VTFSSFDLHPALIAGLESAGFTRCTPIQA). Residues 40–220 (LPVALPGGDV…YEHMNEPEKL (181 aa)) enclose the Helicase ATP-binding domain. 53 to 60 (AQTGTGKT) lines the ATP pocket. A DEAD box motif is present at residues 166–169 (DEAD). The Helicase C-terminal domain occupies 231-393 (RVRQRIYFPS…PVTSELLTPL (163 aa)). Residues 391–558 (TPLPRAPRVP…KPSGSPSLLS (168 aa)) form a disordered region. Residues 402-411 (EGEEADDDAG) are compositionally biased toward acidic residues. The segment covering 419-432 (REAREQRAAEEQRR) has biased composition (basic and acidic residues). Gly residues predominate over residues 435-448 (GRGGPGGSRSGSGG). Residues 449 to 460 (GRRDGAGADGKP) show a composition bias toward basic and acidic residues. A compositionally biased stretch (low complexity) spans 483-497 (VVAAVAAQAPSAGVA). Basic residues predominate over residues 503–512 (PRKRRRRRNG). Residues 539-558 (VVAKPVRAAAKPSGSPSLLS) show a composition bias toward low complexity.

Belongs to the DEAD box helicase family. RhlB subfamily. As to quaternary structure, component of the RNA degradosome, which is a multiprotein complex involved in RNA processing and mRNA degradation.

The protein resides in the cytoplasm. The catalysed reaction is ATP + H2O = ADP + phosphate + H(+). Its function is as follows. DEAD-box RNA helicase involved in RNA degradation. Has RNA-dependent ATPase activity and unwinds double-stranded RNA. The protein is ATP-dependent RNA helicase RhlB of Xanthomonas axonopodis pv. citri (strain 306).